Here is a 451-residue protein sequence, read N- to C-terminus: Tubby-like F-box protein 12 (451 aa).

The region spanning 57 to 112 (SRWVGLPPELLRDVMKRLEEGESNWPSRKDVVACAAVCRTWREICKDIVQSPEICG) is the F-box domain. Residues 387–406 (LEQQQQQQQQNHASSSSSAS) are compositionally biased toward low complexity. Residues 387–407 (LEQQQQQQQQNHASSSSSASD) form a disordered region.

It belongs to the TUB family. Ubiquitous.

The chain is Tubby-like F-box protein 12 (TULP12) from Oryza sativa subsp. japonica (Rice).